Here is a 166-residue protein sequence, read N- to C-terminus: Ureidoglycolate lyase (166 aa).

It belongs to the ureidoglycolate lyase family. As to quaternary structure, homodimer. Ni(2+) is required as a cofactor.

It carries out the reaction (S)-ureidoglycolate = urea + glyoxylate. The protein operates within nitrogen metabolism; (S)-allantoin degradation. Catalyzes the catabolism of the allantoin degradation intermediate (S)-ureidoglycolate, generating urea and glyoxylate. Involved in the utilization of allantoin as nitrogen source. This chain is Ureidoglycolate lyase, found in Rhizobium leguminosarum bv. trifolii (strain WSM2304).